A 130-amino-acid chain; its full sequence is Large ribosomal subunit protein bL21 (130 aa).

Residues 110 to 130 (KTAAQPAADEAVAANEVDSEA) are disordered. Residues 112–130 (AAQPAADEAVAANEVDSEA) are compositionally biased toward low complexity.

The protein belongs to the bacterial ribosomal protein bL21 family. As to quaternary structure, part of the 50S ribosomal subunit. Contacts protein L20.

In terms of biological role, this protein binds to 23S rRNA in the presence of protein L20. The polypeptide is Large ribosomal subunit protein bL21 (Cyanothece sp. (strain PCC 7425 / ATCC 29141)).